Here is a 425-residue protein sequence, read N- to C-terminus: MLDLKRIRTDFDVVAKKLATRGVDQETLTTLKELDIKRRELLIKAEEAKAQRNVASAAIAQAKRNKENADEQIAAMQTLSADIKAIDAELADVDANLQSMVTVLPNTPADDVPLGADEDENVEVRRWGTPREFDFETKAHWDLGESLGILDWERGAKVTGSRFLFYKGLGARLERAIYSFMLDEHAKEGYTEVIPPYMVNHDSMFGTGQYPKFKEDTFELADSPFVLIPTAEVPLTNYYRDEIIDGKELPIYFTAMSPSFRSEAGSAGRDTRGLIRLHQFHKVEMVKFAKPEESYQELEKMTANAENILQKLNLPYRVITLCTGDMGFSAAKTYDLEVWIPAQNTYREISSCSNTEDFQARRAQIRYRDEVDGKVRLLHTLNGSGLAVGRTVAAILENYQNEDGSVTIPEVLRPYMGNIDIIKPN.

230–232 (TAE) is a binding site for L-serine. Residue 261 to 263 (RSE) participates in ATP binding. Residue glutamate 284 coordinates L-serine. 348–351 (EISS) contributes to the ATP binding site. Serine 384 is a binding site for L-serine.

Belongs to the class-II aminoacyl-tRNA synthetase family. Type-1 seryl-tRNA synthetase subfamily. In terms of assembly, homodimer. The tRNA molecule binds across the dimer.

It is found in the cytoplasm. It carries out the reaction tRNA(Ser) + L-serine + ATP = L-seryl-tRNA(Ser) + AMP + diphosphate + H(+). It catalyses the reaction tRNA(Sec) + L-serine + ATP = L-seryl-tRNA(Sec) + AMP + diphosphate + H(+). It functions in the pathway aminoacyl-tRNA biosynthesis; selenocysteinyl-tRNA(Sec) biosynthesis; L-seryl-tRNA(Sec) from L-serine and tRNA(Sec): step 1/1. In terms of biological role, catalyzes the attachment of serine to tRNA(Ser). Is also able to aminoacylate tRNA(Sec) with serine, to form the misacylated tRNA L-seryl-tRNA(Sec), which will be further converted into selenocysteinyl-tRNA(Sec). The sequence is that of Serine--tRNA ligase from Streptococcus agalactiae serotype Ia (strain ATCC 27591 / A909 / CDC SS700).